The following is a 162-amino-acid chain: Caveolin-2 (162 aa).

Residues 1–86 are Cytoplasmic-facing; the sequence is MGLETEKADV…FEISKYVIYK (86 aa). Y19 bears the Phosphotyrosine; by SRC mark. S20 and S23 each carry phosphoserine. Y27 carries the post-translational modification Phosphotyrosine; by SRC. S36 is subject to Phosphoserine. The segment at residues 87–107 is an intramembrane region (helical); it reads FLTVFLAIPLAFAAGIIFATL. The Cytoplasmic portion of the chain corresponds to 108–162; that stretch reads SCLHIWIIMPFVKTCLMVLPSVQTIWRSVTDAVIAPLCTSVGRVFSSVSLQLSRD.

The protein belongs to the caveolin family. In terms of assembly, monomer or homodimer. Interacts with CAV1; the interaction forms a stable heterooligomeric complex that is required for targeting to lipid rafts and for caveolae formation. Tyrosine phosphorylated forms do not form heterooligomers with the Tyr-19-phosphorylated form existing as a monomer or dimer, and the Tyr-27-form as a monomer only. Interacts (tyrosine phosphorylated form) with the SH2 domain-containing proteins, RASA1, NCK1 and SRC. Interacts (tyrosine phosphorylated form) with INSR, the interaction (Tyr-27-phosphorylated form) is increased on insulin stimulation. Interacts (Tyr-19 phosphorylated form) with MAPK1 (phosphorylated form); the interaction, promoted by insulin, leads to nuclear location and MAPK1 activation. Interacts with STAT3; the interaction is increased on insulin-induced tyrosine phosphorylation leading to STAT activation. Phosphorylated on serine and tyrosine residues. CAV1 promotes phosphorylation on Ser-23 which then targets the complex to the plasma membrane, lipid rafts and caveolae. Phosphorylation on Ser-36 appears to modulate mitosis in endothelial cells. Phosphorylation on both Tyr-19 and Tyr-27 is required for insulin-induced 'Ser-727' phosphorylation of STAT3 and its activation. Phosphorylation on Tyr-19 is required for insulin-induced phosphorylation of MAPK1 and DNA binding of STAT3. Tyrosine phosphorylation is induced by both EGF and insulin (By. similarity).

It localises to the nucleus. Its subcellular location is the cytoplasm. It is found in the golgi apparatus membrane. The protein localises to the cell membrane. The protein resides in the membrane. It localises to the caveola. In terms of biological role, may act as a scaffolding protein within caveolar membranes. Interacts directly with G-protein alpha subunits and can functionally regulate their activity. Acts as an accessory protein in conjunction with CAV1 in targeting to lipid rafts and driving caveolae formation. The Ser-36 phosphorylated form has a role in modulating mitosis in endothelial cells. Positive regulator of cellular mitogenesis of the MAPK signaling pathway. Required for the insulin-stimulated nuclear translocation and activation of MAPK1 and STAT3, and the subsequent regulation of cell cycle progression. In Carollia perspicillata (Seba's short-tailed bat), this protein is Caveolin-2 (CAV2).